A 122-amino-acid polypeptide reads, in one-letter code: Ribosomal silencing factor RsfS (122 aa).

This sequence belongs to the Iojap/RsfS family. As to quaternary structure, interacts with ribosomal protein uL14 (rplN).

It is found in the cytoplasm. Functions as a ribosomal silencing factor. Interacts with ribosomal protein uL14 (rplN), blocking formation of intersubunit bridge B8. Prevents association of the 30S and 50S ribosomal subunits and the formation of functional ribosomes, thus repressing translation. This Chromobacterium violaceum (strain ATCC 12472 / DSM 30191 / JCM 1249 / CCUG 213 / NBRC 12614 / NCIMB 9131 / NCTC 9757 / MK) protein is Ribosomal silencing factor RsfS.